A 187-amino-acid chain; its full sequence is Elongation factor P (187 aa).

It belongs to the elongation factor P family.

The protein localises to the cytoplasm. Its pathway is protein biosynthesis; polypeptide chain elongation. Involved in peptide bond synthesis. Stimulates efficient translation and peptide-bond synthesis on native or reconstituted 70S ribosomes in vitro. Probably functions indirectly by altering the affinity of the ribosome for aminoacyl-tRNA, thus increasing their reactivity as acceptors for peptidyl transferase. This is Elongation factor P from Flavobacterium psychrophilum (strain ATCC 49511 / DSM 21280 / CIP 103535 / JIP02/86).